The chain runs to 150 residues: Large ribosomal subunit protein bL9 (150 aa).

It belongs to the bacterial ribosomal protein bL9 family.

Its function is as follows. Binds to the 23S rRNA. The polypeptide is Large ribosomal subunit protein bL9 (Janthinobacterium sp. (strain Marseille) (Minibacterium massiliensis)).